Reading from the N-terminus, the 195-residue chain is Phosphoheptose isomerase (195 aa).

An SIS domain is found at 36–195; that stretch reads LAHCLLSDGK…DLVDHQLFGE (160 aa). 51 to 53 provides a ligand contact to substrate; that stretch reads NGG. Residues H60 and E64 each contribute to the Zn(2+) site. Residues E64, 93-94, 119-121, S124, and Q174 contribute to the substrate site; these read ND and STS. Zn(2+) contacts are provided by Q174 and H182.

This sequence belongs to the SIS family. GmhA subfamily. As to quaternary structure, homotetramer. Zn(2+) serves as cofactor.

The protein localises to the cytoplasm. It carries out the reaction 2 D-sedoheptulose 7-phosphate = D-glycero-alpha-D-manno-heptose 7-phosphate + D-glycero-beta-D-manno-heptose 7-phosphate. It functions in the pathway carbohydrate biosynthesis; D-glycero-D-manno-heptose 7-phosphate biosynthesis; D-glycero-alpha-D-manno-heptose 7-phosphate and D-glycero-beta-D-manno-heptose 7-phosphate from sedoheptulose 7-phosphate: step 1/1. Its function is as follows. Catalyzes the isomerization of sedoheptulose 7-phosphate in D-glycero-D-manno-heptose 7-phosphate. This chain is Phosphoheptose isomerase, found in Methylococcus capsulatus (strain ATCC 33009 / NCIMB 11132 / Bath).